The chain runs to 86 residues: UPF0335 protein BR1752/BS1330_I1746 (86 aa).

The protein belongs to the UPF0335 family.

In Brucella suis biovar 1 (strain 1330), this protein is UPF0335 protein BR1752/BS1330_I1746.